Consider the following 197-residue polypeptide: Holliday junction resolvase RecU (197 aa).

Positions 1 to 21 (MVNYPSGVRAGGYPQKKKNQN) are disordered. The Mg(2+) site is built by threonine 82, aspartate 84, aspartate 97, and glutamine 116.

The protein belongs to the RecU family. Mg(2+) is required as a cofactor.

It is found in the cytoplasm. It catalyses the reaction Endonucleolytic cleavage at a junction such as a reciprocal single-stranded crossover between two homologous DNA duplexes (Holliday junction).. Functionally, endonuclease that resolves Holliday junction intermediates in genetic recombination. Cleaves mobile four-strand junctions by introducing symmetrical nicks in paired strands. Promotes annealing of linear ssDNA with homologous dsDNA. Required for DNA repair, homologous recombination and chromosome segregation. This Oenococcus oeni (strain ATCC BAA-331 / PSU-1) protein is Holliday junction resolvase RecU.